Here is a 406-residue protein sequence, read N- to C-terminus: Interactor protein for cytohesin exchange factors 1 (406 aa).

A PH domain is found at 13-112 (HADCQGWLYK…WLNKLGFAVT (100 aa)). Disordered regions lie at residues 120–173 (DEEC…FSSL), 253–285 (SLNN…EDDE), and 383–406 (PQDP…ENSL). Positions 123–134 (CYSESEQEDPEV) are enriched in acidic residues. The segment covering 144–153 (ASTTSSPVAA) has biased composition (low complexity). Phosphoserine is present on Arg164. Residues 272-285 (MADREEIKSSEDDE) show a composition bias toward basic and acidic residues. Over residues 392 to 406 (EVMNPTSSDCVENSL) the composition is skewed to polar residues.

In terms of assembly, interacts with guanine-nucleotide exchange factors PSCD1, PSCD2, PSCD3 and PSCD4.

It localises to the cytoplasm. The protein localises to the cell membrane. In terms of biological role, enhances the promotion of guanine-nucleotide exchange by PSCD2 on ARF6 in a concentration-dependent manner. This Mus musculus (Mouse) protein is Interactor protein for cytohesin exchange factors 1 (Ipcef1).